Here is a 180-residue protein sequence, read N- to C-terminus: Small ribosomal subunit protein uS4 (180 aa).

Residues 103-174 (RRLQTIVYKK…HPERMMIEKA (72 aa)) enclose the S4 RNA-binding domain.

The protein belongs to the universal ribosomal protein uS4 family. In terms of assembly, part of the 30S ribosomal subunit. Contacts protein S5. The interaction surface between S4 and S5 is involved in control of translational fidelity.

Functionally, one of the primary rRNA binding proteins, it binds directly to 16S rRNA where it nucleates assembly of the body of the 30S subunit. With S5 and S12 plays an important role in translational accuracy. The polypeptide is Small ribosomal subunit protein uS4 (Pyrococcus horikoshii (strain ATCC 700860 / DSM 12428 / JCM 9974 / NBRC 100139 / OT-3)).